We begin with the raw amino-acid sequence, 271 residues long: Phospholipid scramblase family member 5 (271 aa).

The segment covering 1–10 has biased composition (polar residues); the sequence is MASKDAQNQR. A disordered region spans residues 1–33; it reads MASKDAQNQRRGLPGFLPGAPDPDQSLPASSNP. The tract at residues 1 to 45 is proline-rich domain (PRD); that stretch reads MASKDAQNQRRGLPGFLPGAPDPDQSLPASSNPGNQAWQLSLPLP.

The protein belongs to the phospholipid scramblase family.

The polypeptide is Phospholipid scramblase family member 5 (PLSCR5) (Homo sapiens (Human)).